Consider the following 729-residue polypeptide: Phosphoribosylformylglycinamidine synthase subunit PurL (729 aa).

The active site involves histidine 54. 2 residues coordinate ATP: tyrosine 57 and lysine 96. Glutamate 98 serves as a coordination point for Mg(2+). Substrate is bound by residues serine 99–histidine 102 and arginine 121. Histidine 100 acts as the Proton acceptor in catalysis. Mg(2+) is bound at residue aspartate 122. Substrate is bound at residue glutamine 245. Aspartate 273 is a binding site for Mg(2+). Residue glutamate 317 to glutamine 319 participates in substrate binding. Positions 495 and 532 each coordinate ATP. Residue asparagine 533 participates in Mg(2+) binding. Residue serine 535 coordinates substrate.

It belongs to the FGAMS family. In terms of assembly, monomer. Part of the FGAM synthase complex composed of 1 PurL, 1 PurQ and 2 PurS subunits.

Its subcellular location is the cytoplasm. The catalysed reaction is N(2)-formyl-N(1)-(5-phospho-beta-D-ribosyl)glycinamide + L-glutamine + ATP + H2O = 2-formamido-N(1)-(5-O-phospho-beta-D-ribosyl)acetamidine + L-glutamate + ADP + phosphate + H(+). The protein operates within purine metabolism; IMP biosynthesis via de novo pathway; 5-amino-1-(5-phospho-D-ribosyl)imidazole from N(2)-formyl-N(1)-(5-phospho-D-ribosyl)glycinamide: step 1/2. Functionally, part of the phosphoribosylformylglycinamidine synthase complex involved in the purines biosynthetic pathway. Catalyzes the ATP-dependent conversion of formylglycinamide ribonucleotide (FGAR) and glutamine to yield formylglycinamidine ribonucleotide (FGAM) and glutamate. The FGAM synthase complex is composed of three subunits. PurQ produces an ammonia molecule by converting glutamine to glutamate. PurL transfers the ammonia molecule to FGAR to form FGAM in an ATP-dependent manner. PurS interacts with PurQ and PurL and is thought to assist in the transfer of the ammonia molecule from PurQ to PurL. The polypeptide is Phosphoribosylformylglycinamidine synthase subunit PurL (Staphylococcus epidermidis (strain ATCC 35984 / DSM 28319 / BCRC 17069 / CCUG 31568 / BM 3577 / RP62A)).